A 436-amino-acid polypeptide reads, in one-letter code: UPF0597 protein YhaM (436 aa).

The protein belongs to the UPF0597 family.

The sequence is that of UPF0597 protein YhaM from Escherichia coli (strain 55989 / EAEC).